A 539-amino-acid polypeptide reads, in one-letter code: Alpha-aminoadipic semialdehyde dehydrogenase (539 aa).

The N-terminal 26 residues, 1-26 (MLRLARPLCVQTVKASKLSRLWSRPA), are a transit peptide targeting the mitochondrion. 3 positions are modified to N6-acetyllysine; alternate: K86, K94, and K97. N6-succinyllysine; alternate is present on residues K86, K94, and K97. NAD(+) contacts are provided by residues 192–194 (TAF), K218, 258–259 (GT), 274–275 (GS), 274–279 (GSTQVG), and 296–297 (EL). The active-site Proton acceptor is E296. The active-site Nucleophile is C330. T331 provides a ligand contact to (S)-2-amino-6-oxohexanoate. Position 427 (E427) interacts with NAD(+). An N6-acetyllysine modification is found at K462. (S)-2-amino-6-oxohexanoate is bound by residues G489 and A490. The residue at position 500 (K500) is an N6-acetyllysine. The residue at position 537 (K537) is an N6-succinyllysine.

The protein belongs to the aldehyde dehydrogenase family. As to quaternary structure, homotetramer. Abundant in kidney, liver, cochlea and outer hair cells but not inner hair cells or vestibular type I hair cells. Very low levels in lung, brain, intestine and pancreas.

The protein localises to the cytoplasm. It is found in the cytosol. It localises to the nucleus. The protein resides in the mitochondrion. The catalysed reaction is nonanal + NAD(+) + H2O = nonanoate + NADH + 2 H(+). It carries out the reaction (S)-2-amino-6-oxohexanoate + NAD(+) + H2O = L-2-aminoadipate + NADH + 2 H(+). The enzyme catalyses betaine aldehyde + NAD(+) + H2O = glycine betaine + NADH + 2 H(+). It catalyses the reaction an aldehyde + NAD(+) + H2O = a carboxylate + NADH + 2 H(+). The catalysed reaction is hexanal + NAD(+) + H2O = hexanoate + NADH + 2 H(+). It carries out the reaction octanal + NAD(+) + H2O = octanoate + NADH + 2 H(+). The enzyme catalyses (E)-non-2-enal + NAD(+) + H2O = (E)-non-2-enoate + NADH + 2 H(+). It catalyses the reaction (E)-4-hydroxynon-2-enal + NAD(+) + H2O = (E)-4-hydroxynon-2-enoate + NADH + 2 H(+). It functions in the pathway amine and polyamine biosynthesis; betaine biosynthesis via choline pathway; betaine from betaine aldehyde: step 1/1. In terms of biological role, multifunctional enzyme mediating important protective effects. Metabolizes betaine aldehyde to betaine, an important cellular osmolyte and methyl donor. Protects cells from oxidative stress by metabolizing a number of lipid peroxidation-derived aldehydes. Involved in lysine catabolism. In Rattus norvegicus (Rat), this protein is Alpha-aminoadipic semialdehyde dehydrogenase.